A 388-amino-acid chain; its full sequence is Succinate--CoA ligase [ADP-forming] subunit beta (388 aa).

One can recognise an ATP-grasp domain in the interval 9–244 (KEIFRSMGVA…LEEEDPKEIE (236 aa)). ATP contacts are provided by residues Lys-46, 53–55 (GRG), Glu-99, Cys-102, and Glu-107. Mg(2+) is bound by residues Asn-199 and Asp-213. Substrate is bound by residues Asn-264 and 321–323 (GIM).

This sequence belongs to the succinate/malate CoA ligase beta subunit family. As to quaternary structure, heterotetramer of two alpha and two beta subunits. The cofactor is Mg(2+).

It catalyses the reaction succinate + ATP + CoA = succinyl-CoA + ADP + phosphate. The catalysed reaction is GTP + succinate + CoA = succinyl-CoA + GDP + phosphate. The protein operates within carbohydrate metabolism; tricarboxylic acid cycle; succinate from succinyl-CoA (ligase route): step 1/1. In terms of biological role, succinyl-CoA synthetase functions in the citric acid cycle (TCA), coupling the hydrolysis of succinyl-CoA to the synthesis of either ATP or GTP and thus represents the only step of substrate-level phosphorylation in the TCA. The beta subunit provides nucleotide specificity of the enzyme and binds the substrate succinate, while the binding sites for coenzyme A and phosphate are found in the alpha subunit. In Staphylococcus aureus (strain MRSA252), this protein is Succinate--CoA ligase [ADP-forming] subunit beta.